The primary structure comprises 712 residues: Ribosome-releasing factor 2, mitochondrial (712 aa).

A mitochondrion-targeting transit peptide spans 1–28 (MQYSLLSAQLRCSRFLLRQQAPFINRCY). Residues 30-309 (DDIRNIGILA…AVNAYLPTPN (280 aa)) form the tr-type G domain. GTP contacts are provided by residues 39–46 (AHIDAGKT), 103–107 (DTPGH), and 157–160 (NKMD).

This sequence belongs to the TRAFAC class translation factor GTPase superfamily. Classic translation factor GTPase family. EF-G/EF-2 subfamily.

The protein localises to the mitochondrion. Mitochondrial GTPase that mediates the disassembly of ribosomes from messenger RNA at the termination of mitochondrial protein biosynthesis. Not involved in the GTP-dependent ribosomal translocation step during translation elongation. The protein is Ribosome-releasing factor 2, mitochondrial of Drosophila virilis (Fruit fly).